The sequence spans 159 residues: Lipoprotein signal peptidase (159 aa).

Transmembrane regions (helical) follow at residues 59–79 (PMIL…YVVF) and 87–107 (FLIT…DRIL). Active-site residues include D113 and D139. The helical transmembrane segment at 131–151 (LWPVFNIADSAITIGACVLVI) threads the bilayer.

The protein belongs to the peptidase A8 family.

It is found in the cell inner membrane. It carries out the reaction Release of signal peptides from bacterial membrane prolipoproteins. Hydrolyzes -Xaa-Yaa-Zaa-|-(S,diacylglyceryl)Cys-, in which Xaa is hydrophobic (preferably Leu), and Yaa (Ala or Ser) and Zaa (Gly or Ala) have small, neutral side chains.. It functions in the pathway protein modification; lipoprotein biosynthesis (signal peptide cleavage). Functionally, this protein specifically catalyzes the removal of signal peptides from prolipoproteins. The polypeptide is Lipoprotein signal peptidase (Chlorobium phaeobacteroides (strain BS1)).